The chain runs to 348 residues: Bifunctional dihydroflavonol 4-reductase/flavanone 4-reductase (348 aa).

NADP(+) contacts are provided by Lys-44 and Tyr-163.

The protein belongs to the NAD(P)-dependent epimerase/dehydratase family. Dihydroflavonol-4-reductase subfamily.

It carries out the reaction a (2R,3S,4S)-leucoanthocyanidin + NADP(+) = a (2R,3R)-dihydroflavonol + NADPH + H(+). It catalyses the reaction (2S)-flavan-4-ol + NADP(+) = (2S)-flavanone + NADPH + H(+). In terms of biological role, bifunctional enzyme involved in flavonoid metabolism. May use dihydroquercetin, dihydrokaempferol, eriodictyol, garbanzol (5-deoxydihydrokaempferol), dihydrofisetin (5-deoxydihydroquercetin), naringenin to a low extent (10%), but not 5-deoxynaringenin or butin (5-deoxyeriodictyol) as substrate. The sequence is that of Bifunctional dihydroflavonol 4-reductase/flavanone 4-reductase (DFR) from Malus domestica (Apple).